The primary structure comprises 217 residues: Ribulose-phosphate 3-epimerase (217 aa).

Serine 6 lines the substrate pocket. A divalent metal cation contacts are provided by histidine 29, aspartate 31, and histidine 62. The active-site Proton acceptor is the aspartate 31. Residues histidine 62, 138–141 (GFGG), 171–173 (DGG), and 193–194 (GS) contribute to the substrate site. Residue aspartate 171 coordinates a divalent metal cation. Aspartate 171 functions as the Proton donor in the catalytic mechanism.

The protein belongs to the ribulose-phosphate 3-epimerase family. Requires a divalent metal cation as cofactor.

The enzyme catalyses D-ribulose 5-phosphate = D-xylulose 5-phosphate. Its pathway is carbohydrate degradation. Catalyzes the reversible epimerization of D-ribulose 5-phosphate to D-xylulose 5-phosphate. This chain is Ribulose-phosphate 3-epimerase, found in Helicobacter pylori (strain J99 / ATCC 700824) (Campylobacter pylori J99).